Here is a 347-residue protein sequence, read N- to C-terminus: S-adenosylmethionine:tRNA ribosyltransferase-isomerase (347 aa).

It belongs to the QueA family. In terms of assembly, monomer.

The protein resides in the cytoplasm. It catalyses the reaction 7-aminomethyl-7-carbaguanosine(34) in tRNA + S-adenosyl-L-methionine = epoxyqueuosine(34) in tRNA + adenine + L-methionine + 2 H(+). It functions in the pathway tRNA modification; tRNA-queuosine biosynthesis. Its function is as follows. Transfers and isomerizes the ribose moiety from AdoMet to the 7-aminomethyl group of 7-deazaguanine (preQ1-tRNA) to give epoxyqueuosine (oQ-tRNA). The protein is S-adenosylmethionine:tRNA ribosyltransferase-isomerase of Gluconobacter oxydans (strain 621H) (Gluconobacter suboxydans).